We begin with the raw amino-acid sequence, 189 residues long: Elongation factor P (189 aa).

The protein belongs to the elongation factor P family.

It is found in the cytoplasm. It participates in protein biosynthesis; polypeptide chain elongation. Functionally, involved in peptide bond synthesis. Stimulates efficient translation and peptide-bond synthesis on native or reconstituted 70S ribosomes in vitro. Probably functions indirectly by altering the affinity of the ribosome for aminoacyl-tRNA, thus increasing their reactivity as acceptors for peptidyl transferase. This chain is Elongation factor P, found in Chloroflexus aurantiacus (strain ATCC 29364 / DSM 637 / Y-400-fl).